Reading from the N-terminus, the 178-residue chain is Nuclear transcription factor Y subunit B-2 (178 aa).

A DNA-binding region spans residues leucine 39–serine 45. The segment at leucine 66 to valine 77 is subunit association domain (SAD). Positions serine 131–glutamine 156 are disordered.

The protein belongs to the NFYB/HAP3 subunit family. Heterotrimeric transcription factor composed of three components, NF-YA, NF-YB and NF-YC. NF-YB and NF-YC must interact and dimerize for NF-YA association and DNA binding. Interacts with NFYC4 and NFYC6. Ubiquitous.

It is found in the nucleus. Its function is as follows. Component of the NF-Y/HAP transcription factor complex. The NF-Y complex stimulates the transcription of various genes by recognizing and binding to a CCAAT motif in promoters. May regulate the expression of photosynthetic genes, and may be involved in chloroplast and amyloplast development. The sequence is that of Nuclear transcription factor Y subunit B-2 (NFYB2) from Oryza sativa subsp. japonica (Rice).